The following is a 548-amino-acid chain: Probable malate:quinone oxidoreductase (548 aa).

It belongs to the MQO family. FAD serves as cofactor.

It catalyses the reaction (S)-malate + a quinone = a quinol + oxaloacetate. It functions in the pathway carbohydrate metabolism; tricarboxylic acid cycle; oxaloacetate from (S)-malate (quinone route): step 1/1. This is Probable malate:quinone oxidoreductase from Escherichia coli O6:K15:H31 (strain 536 / UPEC).